The following is a 756-amino-acid chain: Serine/threonine-protein kinase DCLK1 (756 aa).

2 positions are modified to phosphoserine: S32 and S36. At T46 the chain carries Phosphothreonine. Doublecortin domains lie at 57-143 and 186-269; these read KKVR…LEYT and KLVT…QDDF. The tract at residues 288-393 is disordered; it reads ASASRRGTTK…QRGWRREESE (106 aa). The span at 297–313 shows a compositional bias: low complexity; the sequence is KSPGPSRRSKSPASTSS. Phosphoserine occurs at positions 305, 307, 330, 332, 334, 337, 347, 352, 353, 355, 358, 362, and 364. Positions 347–364 are enriched in low complexity; the sequence is SQHGGSSTSLSSTKVCSS. Residues 366-375 show a composition bias toward acidic residues; sequence DENDGPGEGD. S392 is modified (phosphoserine). Residues 406–663 form the Protein kinase domain; the sequence is YKVGRTIGDG…AVQVLEHPWV (258 aa). Residues 412–420 and K435 contribute to the ATP site; that span reads IGDGNFAVV. Residue D527 is the Proton acceptor of the active site. A Phosphotyrosine modification is found at Y536. The segment covering 711–723 has biased composition (basic and acidic residues); that stretch reads QVFRRRRNQDVRS. Residues 711-756 are disordered; that stretch reads QVFRRRRNQDVRSRYKAQPAPPELNSESEDYSPSSSETVRSPNSPF. Phosphoserine occurs at positions 742, 751, and 754.

It belongs to the protein kinase superfamily. CAMK Ser/Thr protein kinase family. CaMK subfamily.

It carries out the reaction L-seryl-[protein] + ATP = O-phospho-L-seryl-[protein] + ADP + H(+). The catalysed reaction is L-threonyl-[protein] + ATP = O-phospho-L-threonyl-[protein] + ADP + H(+). Probable kinase that may be involved in a calcium-signaling pathway controlling neuronal migration in the developing brain. May also participate in functions of the mature nervous system. The protein is Serine/threonine-protein kinase DCLK1 (Dclk1) of Mus musculus (Mouse).